The primary structure comprises 177 residues: Myosin regulatory light chain 2 (177 aa).

Positions 1–16 are enriched in basic residues; sequence MSRKSGSRSSSKRSKK. The tract at residues 1–24 is disordered; it reads MSRKSGSRSSSKRSKKSGGGSNVF. 6 igE-binding epitope regions span residues 13–30, 22–48, 49–66, 58–90, 79–99, and 118–141; these read RSKK…FTQR, NVFD…DKDG, VIGK…GRIA, TFDE…LLNM, PAPI…TGES, and NIDC…QEAD. The EF-hand 1 domain occupies 30–65; that stretch reads RQVAEFKEGFQLMDRDKDGVIGKTDLRGTFDEIGRI. Ca(2+)-binding residues include Asp-43, Asp-45, Asp-47, and Asp-54. Positions 135 to 170 constitute an EF-hand 2 domain; that stretch reads FSSQEADDALDQMDIDDGGKIDVQGVIQMLTAGGGD.

Myosin is a hexamer of 2 heavy chains and 4 light chains. As to expression, expressed in tail muscle (at protein level).

The sequence is that of Myosin regulatory light chain 2 from Penaeus vannamei (Whiteleg shrimp).